Here is an 813-residue protein sequence, read N- to C-terminus: Protein translocase subunit SecA 2 (813 aa).

Residues Gln105, 123–127, and Asp525 each bind ATP; that span reads GEGKT.

It belongs to the SecA family. Monomer and homodimer. Part of the essential Sec protein translocation apparatus which comprises SecA, SecYEG and auxiliary proteins SecDF-YajC and YidC.

It is found in the cell inner membrane. The protein resides in the cytoplasm. It carries out the reaction ATP + H2O + cellular proteinSide 1 = ADP + phosphate + cellular proteinSide 2.. Part of the Sec protein translocase complex. Interacts with the SecYEG preprotein conducting channel. Has a central role in coupling the hydrolysis of ATP to the transfer of proteins into and across the cell membrane, serving both as a receptor for the preprotein-SecB complex and as an ATP-driven molecular motor driving the stepwise translocation of polypeptide chains across the membrane. This Rhodopseudomonas palustris (strain BisA53) protein is Protein translocase subunit SecA 2.